Reading from the N-terminus, the 364-residue chain is Alanine racemase (364 aa).

Lys-35 acts as the Proton acceptor; specific for D-alanine in catalysis. Residue Lys-35 is modified to N6-(pyridoxal phosphate)lysine. Residue Arg-136 coordinates substrate. Catalysis depends on Tyr-261, which acts as the Proton acceptor; specific for L-alanine. A substrate-binding site is contributed by Met-309.

It belongs to the alanine racemase family. Requires pyridoxal 5'-phosphate as cofactor.

The enzyme catalyses L-alanine = D-alanine. Its pathway is amino-acid biosynthesis; D-alanine biosynthesis; D-alanine from L-alanine: step 1/1. Functionally, catalyzes the interconversion of L-alanine and D-alanine. May also act on other amino acids. The protein is Alanine racemase (alr) of Shewanella amazonensis (strain ATCC BAA-1098 / SB2B).